Consider the following 202-residue polypeptide: Imidazoleglycerol-phosphate dehydratase (202 aa).

It belongs to the imidazoleglycerol-phosphate dehydratase family.

Its subcellular location is the cytoplasm. It carries out the reaction D-erythro-1-(imidazol-4-yl)glycerol 3-phosphate = 3-(imidazol-4-yl)-2-oxopropyl phosphate + H2O. Its pathway is amino-acid biosynthesis; L-histidine biosynthesis; L-histidine from 5-phospho-alpha-D-ribose 1-diphosphate: step 6/9. In Rhizobium leguminosarum bv. trifolii (strain WSM2304), this protein is Imidazoleglycerol-phosphate dehydratase.